The primary structure comprises 907 residues: Valine--tRNA ligase (907 aa).

A 'HIGH' region motif is present at residues 45-55 (PNVTGSLHMGH). The 'KMSKS' region motif lies at 554–558 (KMSKS). Residue lysine 557 coordinates ATP. Residues 838 to 870 (GQLIDLEAERARLVKNVSKIEQDIEKISVKLNN) adopt a coiled-coil conformation.

It belongs to the class-I aminoacyl-tRNA synthetase family. ValS type 1 subfamily. Monomer.

Its subcellular location is the cytoplasm. The catalysed reaction is tRNA(Val) + L-valine + ATP = L-valyl-tRNA(Val) + AMP + diphosphate. Its function is as follows. Catalyzes the attachment of valine to tRNA(Val). As ValRS can inadvertently accommodate and process structurally similar amino acids such as threonine, to avoid such errors, it has a 'posttransfer' editing activity that hydrolyzes mischarged Thr-tRNA(Val) in a tRNA-dependent manner. This is Valine--tRNA ligase from Bartonella quintana (strain Toulouse) (Rochalimaea quintana).